Consider the following 252-residue polypeptide: Small ribosomal subunit protein uS2 (252 aa).

Belongs to the universal ribosomal protein uS2 family.

The protein is Small ribosomal subunit protein uS2 of Ruminiclostridium cellulolyticum (strain ATCC 35319 / DSM 5812 / JCM 6584 / H10) (Clostridium cellulolyticum).